A 670-amino-acid polypeptide reads, in one-letter code: DNA ligase (670 aa).

NAD(+) is bound by residues 36-40 (DEEYD), 84-85 (SL), and glutamate 116. Lysine 118 acts as the N6-AMP-lysine intermediate in catalysis. NAD(+) contacts are provided by arginine 139, glutamate 177, lysine 293, and lysine 317. Zn(2+) contacts are provided by cysteine 411, cysteine 414, cysteine 429, and cysteine 434. Residues 594–670 (KKPSPLKGLT…SYEEFLKMLE (77 aa)) enclose the BRCT domain.

The protein belongs to the NAD-dependent DNA ligase family. LigA subfamily. Requires Mg(2+) as cofactor. It depends on Mn(2+) as a cofactor.

It carries out the reaction NAD(+) + (deoxyribonucleotide)n-3'-hydroxyl + 5'-phospho-(deoxyribonucleotide)m = (deoxyribonucleotide)n+m + AMP + beta-nicotinamide D-nucleotide.. Functionally, DNA ligase that catalyzes the formation of phosphodiester linkages between 5'-phosphoryl and 3'-hydroxyl groups in double-stranded DNA using NAD as a coenzyme and as the energy source for the reaction. It is essential for DNA replication and repair of damaged DNA. This chain is DNA ligase, found in Thermodesulfovibrio yellowstonii (strain ATCC 51303 / DSM 11347 / YP87).